Consider the following 378-residue polypeptide: Homoserine O-acetyltransferase (378 aa).

Residues 52-337 (NAILICHALT…YSQHGHDTFL (286 aa)) form the AB hydrolase-1 domain. Ser-148 functions as the Nucleophile in the catalytic mechanism. Arg-217 serves as a coordination point for substrate. Residues Asp-304 and His-333 contribute to the active site. Residue Asp-334 participates in substrate binding.

The protein belongs to the AB hydrolase superfamily. MetX family. As to quaternary structure, homodimer.

Its subcellular location is the cytoplasm. The enzyme catalyses L-homoserine + acetyl-CoA = O-acetyl-L-homoserine + CoA. The protein operates within amino-acid biosynthesis; L-methionine biosynthesis via de novo pathway; O-acetyl-L-homoserine from L-homoserine: step 1/1. Its function is as follows. Transfers an acetyl group from acetyl-CoA to L-homoserine, forming acetyl-L-homoserine. In Chloroherpeton thalassium (strain ATCC 35110 / GB-78), this protein is Homoserine O-acetyltransferase.